Here is a 190-residue protein sequence, read N- to C-terminus: MSGDKPHGRLVILAGPSAVGKSTVVDRLRSDVPNLYFSVSMTTRDPRPGEVDGRDYFYVTAQEFQEKIDRGEMLEWADIHGGLQRSGTPAEPVRQAREEGRPVLVEVDLVGARNIARLIPEAETIFLAPPSWEVLVERLTGRGTESQDVINRRLETAREELAAQSEFKHVIINDDVDTAVSAIKAVLLGT.

One can recognise a Guanylate kinase-like domain in the interval 8-188 (GRLVILAGPS…AVSAIKAVLL (181 aa)). Residue 15–22 (GPSAVGKS) coordinates ATP.

The protein belongs to the guanylate kinase family.

It localises to the cytoplasm. The catalysed reaction is GMP + ATP = GDP + ADP. In terms of biological role, essential for recycling GMP and indirectly, cGMP. This is Guanylate kinase from Corynebacterium efficiens (strain DSM 44549 / YS-314 / AJ 12310 / JCM 11189 / NBRC 100395).